Here is a 268-residue protein sequence, read N- to C-terminus: 4-hydroxy-tetrahydrodipicolinate reductase (268 aa).

NAD(+) is bound by residues 9 to 14, glutamate 35, 99 to 101, and 123 to 126; these read GVCGRM, GTT, and APNY. Histidine 156 acts as the Proton donor/acceptor in catalysis. Histidine 157 is a (S)-2,3,4,5-tetrahydrodipicolinate binding site. Residue lysine 160 is the Proton donor of the active site. 166–167 serves as a coordination point for (S)-2,3,4,5-tetrahydrodipicolinate; sequence GT.

It belongs to the DapB family.

It localises to the cytoplasm. The catalysed reaction is (S)-2,3,4,5-tetrahydrodipicolinate + NAD(+) + H2O = (2S,4S)-4-hydroxy-2,3,4,5-tetrahydrodipicolinate + NADH + H(+). The enzyme catalyses (S)-2,3,4,5-tetrahydrodipicolinate + NADP(+) + H2O = (2S,4S)-4-hydroxy-2,3,4,5-tetrahydrodipicolinate + NADPH + H(+). The protein operates within amino-acid biosynthesis; L-lysine biosynthesis via DAP pathway; (S)-tetrahydrodipicolinate from L-aspartate: step 4/4. In terms of biological role, catalyzes the conversion of 4-hydroxy-tetrahydrodipicolinate (HTPA) to tetrahydrodipicolinate. The chain is 4-hydroxy-tetrahydrodipicolinate reductase from Magnetococcus marinus (strain ATCC BAA-1437 / JCM 17883 / MC-1).